A 413-amino-acid polypeptide reads, in one-letter code: 2,3-bisphosphoglycerate-independent phosphoglycerate mutase (413 aa).

Belongs to the BPG-independent phosphoglycerate mutase family. A-PGAM subfamily.

It catalyses the reaction (2R)-2-phosphoglycerate = (2R)-3-phosphoglycerate. Its pathway is carbohydrate degradation; glycolysis; pyruvate from D-glyceraldehyde 3-phosphate: step 3/5. Its function is as follows. Catalyzes the interconversion of 2-phosphoglycerate and 3-phosphoglycerate. This Sulfurisphaera tokodaii (strain DSM 16993 / JCM 10545 / NBRC 100140 / 7) (Sulfolobus tokodaii) protein is 2,3-bisphosphoglycerate-independent phosphoglycerate mutase.